The primary structure comprises 1033 residues: Tyrosine-protein kinase-like otk (1033 aa).

The N-terminal stretch at 1–22 (MTARMISIYGLVLASMMASVLA) is a signal peptide. Residues 23–581 (SSSRFQRLPQ…GGDGFLVTRA (559 aa)) lie on the Extracellular side of the membrane. Ig-like C2-type domains follow at residues 25 to 114 (SRFQ…AKLS), 113 to 199 (LSVI…RVMS), 251 to 365 (PEDL…VPVS), 368 to 463 (PGVL…VAIN), and 468 to 558 (PKFS…VQLI). Residue N39 is glycosylated (N-linked (GlcNAc...) asparagine). Cystine bridges form between C46-C95, C137-C188, C276-C354, and C399-C447. N336, N417, N429, N444, N457, N512, and N524 each carry an N-linked (GlcNAc...) asparagine glycan. C490 and C542 are oxidised to a cystine. A helical membrane pass occupies residues 582-602 (VLITMTVALAYIVLVVGLMLW). The Cytoplasmic portion of the chain corresponds to 603–1033 (CRYRRQARKA…LSKAMQSAEK (431 aa)). Disordered regions lie at residues 617-679 (LSTK…KKSA) and 718-760 (SPSD…KTSM). Over residues 655–673 (KSSGDAQKSDDTACSQQSR) the composition is skewed to polar residues. S678 carries the phosphoserine modification. The region spanning 692 to 1028 (LSELIQIGRG…QLGAALSKAM (337 aa)) is the Protein kinase; inactive domain. Residues 720–731 (SDKDADTEKQHS) are compositionally biased toward basic and acidic residues.

Belongs to the protein kinase superfamily. Tyr protein kinase family. Insulin receptor subfamily. Interacts with plexA; component of a receptor complex that mediates the repulsive signaling in response to Semaphorin ligands.

It localises to the cell membrane. Functionally, acts as a calcium-dependent, homophilic cell adhesion molecule that regulates neural recognition during the development of the nervous system. Component of the repulsive Plexin signaling response to regulate motor axon guidance at the embryonic stage. Also component of a receptor complex that is required in the adult visual system to innervate the lamina layer; specific targeting of R1-R6 axons. The polypeptide is Tyrosine-protein kinase-like otk (Drosophila yakuba (Fruit fly)).